A 483-amino-acid chain; its full sequence is GTPase Der (483 aa).

EngA-type G domains lie at 3–167 (FTLA…GEER) and 212–387 (LRIA…EIWN). GTP is bound by residues 9–16 (GRPNVGKS), 56–60 (DTAGL), 119–122 (NKAE), 218–225 (GRPNAGKS), 265–269 (DTAGM), and 330–333 (NKWD). Positions 388–472 (RRISTGRLNR…PIRLSLRTSD (85 aa)) constitute a KH-like domain.

This sequence belongs to the TRAFAC class TrmE-Era-EngA-EngB-Septin-like GTPase superfamily. EngA (Der) GTPase family. Associates with the 50S ribosomal subunit.

In terms of biological role, GTPase that plays an essential role in the late steps of ribosome biogenesis. The chain is GTPase Der from Brucella abortus (strain 2308).